Here is a 427-residue protein sequence, read N- to C-terminus: Neuronal pentraxin-2 (427 aa).

A signal peptide spans 1–17; it reads MLALLAAGVAFAVVVLA. N-linked (GlcNAc...) asparagine glycosylation is found at Asn144 and Asn185. Residues 219 to 420 enclose the Pentraxin (PTX) domain; that stretch reads DAFKVSLPFR…GASKWPVETC (202 aa). A disulfide bridge connects residues Cys249 and Cys309. Ca(2+) is bound by residues Asn273, Glu351, Gln352, Asp353, and Gln363. An N-linked (GlcNAc...) asparagine glycan is attached at Asn389.

As to quaternary structure, homooligomer or heterooligomer (probably pentamer) with neuronal pentraxin receptor (NPTXR). Ca(2+) is required as a cofactor. Testis specific.

The protein localises to the cytoplasmic vesicle. The protein resides in the secretory vesicle. It is found in the acrosome lumen. May be involved in binding, concentrating, and sorting soluble glycoproteins or glycolipids that are destined for the acrosome. The protein is Neuronal pentraxin-2 (NPTX2) of Cavia porcellus (Guinea pig).